We begin with the raw amino-acid sequence, 346 residues long: Oxidoreductase calI (346 aa).

The disordered stretch occupies residues 11-33 (VSTPQGRGDGRPTADQVLRDQDP). Basic and acidic residues predominate over residues 18–32 (GDGRPTADQVLRDQD). 4 residues coordinate NADP(+): Leu-52, Lys-76, Asp-100, and Asn-128. Ser-181 (proton donor) is an active-site residue. The NADP(+) site is built by Tyr-208, Lys-212, and Ile-241. The Proton acceptor role is filled by Tyr-208. Lys-212 serves as the catalytic Lowers pKa of active site Tyr.

Belongs to the short-chain dehydrogenases/reductases (SDR) family.

It functions in the pathway secondary metabolite biosynthesis. In terms of biological role, oxidoreductase; part of the gene cluster that mediates the biosynthesis of calbistrin A and related compounds. Calbistrin A is a secondary metabolite with an interesting structure that was recently found to have bioactivity against leukemia cells. It consists of two polyketides linked by an ester bond: a bicyclic decalin containing polyketide and a linear 12 carbon dioic acid structure. The polyketide synthase calA is probably responsible for forming the decalin moiety. Because calA lacks a designated enoylreductase (ER) domain, the required activity is provided by the trans-enoyl reductase calK. Following release from the PKS, calF then probably catalyzes the oxidation and the subsequent Diels Alder cycloisomerization that lead to the formation of the decalin moiety. The decalin polyketide backbone includes two C-methyl groups, at C7 and C11 in backbone, of which the C7 position is probably methylated by the methyltransferase domain of calA. A candidate for adding the methyl group at C11, if not done by CalA, is the cluster methyltransferase calH. Several additional tailoring enzymes within the cluster could be involved in the modification of the decalin polyketide product. Those include the 3 cytochrome P450 monooxygenases CalE, CalG and CalL, of which one might be responsible for the introduction of the extra hydroxyl group attached to the backbone of the decalin moiety, at position C9 in the backbone, that allows for attachment of the linear moiety. One tailoring enzyme activity that is expected to be involved in biosynthesis of calbistrin is an acyltransferase for connecting the two polyketide synthase products, and which could be performed by the cluster acyltransferase calJ. The enzyme responsible for the biosynthesis of the linear moiety, probably a second PKS, has not been identified yet. The polypeptide is Oxidoreductase calI (Penicillium decumbens).